A 406-amino-acid polypeptide reads, in one-letter code: Replication protein (406 aa).

In terms of biological role, is involved in replication of pIP404. The protein is Replication protein (rep) of Clostridium perfringens.